We begin with the raw amino-acid sequence, 154 residues long: 6,7-dimethyl-8-ribityllumazine synthase (154 aa).

Residues Phe-26, 60 to 62 (ALE), and 84 to 86 (CII) each bind 5-amino-6-(D-ribitylamino)uracil. 89–90 (ET) provides a ligand contact to (2S)-2-hydroxy-3-oxobutyl phosphate. Catalysis depends on His-92, which acts as the Proton donor. Asn-117 lines the 5-amino-6-(D-ribitylamino)uracil pocket. Arg-131 contacts (2S)-2-hydroxy-3-oxobutyl phosphate.

This sequence belongs to the DMRL synthase family.

The catalysed reaction is (2S)-2-hydroxy-3-oxobutyl phosphate + 5-amino-6-(D-ribitylamino)uracil = 6,7-dimethyl-8-(1-D-ribityl)lumazine + phosphate + 2 H2O + H(+). Its pathway is cofactor biosynthesis; riboflavin biosynthesis; riboflavin from 2-hydroxy-3-oxobutyl phosphate and 5-amino-6-(D-ribitylamino)uracil: step 1/2. In terms of biological role, catalyzes the formation of 6,7-dimethyl-8-ribityllumazine by condensation of 5-amino-6-(D-ribitylamino)uracil with 3,4-dihydroxy-2-butanone 4-phosphate. This is the penultimate step in the biosynthesis of riboflavin. This chain is 6,7-dimethyl-8-ribityllumazine synthase, found in Acidovorax sp. (strain JS42).